The primary structure comprises 429 residues: Guanine nucleotide-binding protein subunit alpha (429 aa).

The N-myristoyl glycine moiety is linked to residue G2. C3 is lipidated: S-palmitoyl cysteine. The G-alpha domain occupies 40 to 429; it reads KGVKLLLLGA…QQNLKKSGIM (390 aa). The G1 motif stretch occupies residues 43–56; it reads KLLLLGAGESGKST. The GTP site is built by E51, S52, G53, K54, S55, and T56. A Mg(2+)-binding site is contributed by S55. Residues 125-197 form a not present in other G-proteins region; it reads LKQIDADVAG…KDSEQFTRLS (73 aa). The G2 motif stretch occupies residues 249 to 257; it reads DILKGRIKT. The GTP site is built by L251, T257, G279, N345, K346, D348, and A401. Mg(2+) is bound at residue T257. The segment at 272–281 is G3 motif; that stretch reads FKVLDAGGQR. The tract at residues 341–348 is G4 motif; sequence ILFLNKID. The tract at residues 399–404 is G5 motif; that stretch reads TCATDS.

The protein belongs to the G-alpha family. G(q) subfamily. As to quaternary structure, g proteins are composed of 3 units; alpha, beta and gamma. The alpha chain contains the guanine nucleotide binding site. The cofactor is Mg(2+).

Its function is as follows. Guanine nucleotide-binding proteins (G proteins) are involved as modulators or transducers in various transmembrane signaling systems. Involved in the mating pathway. The sequence is that of Guanine nucleotide-binding protein subunit alpha (CAG1) from Candida albicans (strain WO-1) (Yeast).